Here is a 459-residue protein sequence, read N- to C-terminus: Sperm microtubule associated protein 2-like (459 aa).

The tract at residues 1–138 is disordered; the sequence is MEEGDFSGSS…QEDGKDDLFP (138 aa). The segment covering 21 to 30 has biased composition (low complexity); it reads TTTTTETRTT. Acidic residues predominate over residues 47–63; that stretch reads NGDEAEAVGEEGQEEDY. A compositionally biased stretch (basic and acidic residues) spans 64–73; the sequence is EGSKTHKSHE. The segment covering 77–87 has biased composition (polar residues); the sequence is SFRSHNSSDPP. Basic and acidic residues-rich tracts occupy residues 91-112 and 127-136; these read KASD…KTSD and ERQEDGKDDL. THEG repeat units follow at residues 172–190, 212–231, 258–277, 291–310, 327–346, 367–386, 403–422, and 440–459; these read KKCF…PKKQ, AALK…PRLV, PALV…PNKF, TTRY…AKGT, STLS…PRIK, AALL…SKRV, AATH…PHTR, and SALK…PIVR.

The protein is Sperm microtubule associated protein 2-like of Mus musculus (Mouse).